The following is a 154-amino-acid chain: Small ribosomal subunit protein uS15 (154 aa).

A compositionally biased stretch (basic residues) spans 1–10; that stretch reads MARMHSRRRG. The disordered stretch occupies residues 1 to 32; it reads MARMHSRRRGSSGSDRPTADEPPEWSEVDEDA. The segment covering 21 to 32 has biased composition (acidic residues); it reads EPPEWSEVDEDA.

It belongs to the universal ribosomal protein uS15 family. As to quaternary structure, part of the 30S ribosomal subunit.

This is Small ribosomal subunit protein uS15 from Natronomonas pharaonis (strain ATCC 35678 / DSM 2160 / CIP 103997 / JCM 8858 / NBRC 14720 / NCIMB 2260 / Gabara) (Halobacterium pharaonis).